Here is a 284-residue protein sequence, read N- to C-terminus: Co-chaperone protein DjlA (284 aa).

Residues 1–6 are Periplasmic-facing; that stretch reads MHIFGK. Residues 7 to 30 traverse the membrane as a helical segment; sequence ILGAFFGFLFGGPFGAIFGIFLGH. Over 31–284 the chain is Cytoplasmic; the sequence is QFDKARRLNQ…ELIRKEKGIK (254 aa). The interval 190–211 is disordered; sequence QGGGFGGSQQQSHSGQQWQQPS. Residues 197–211 are compositionally biased toward low complexity; the sequence is SQQQSHSGQQWQQPS. The region spanning 218 to 284 is the J domain; the sequence is DAYEVLGVSE…ELIRKEKGIK (67 aa).

As to quaternary structure, homodimer.

The protein localises to the cell inner membrane. Regulatory DnaK co-chaperone. Direct interaction between DnaK and DjlA is needed for the induction of the wcaABCDE operon, involved in the synthesis of a colanic acid polysaccharide capsule, possibly through activation of the RcsB/RcsC phosphotransfer signaling pathway. The colanic acid capsule may help the bacterium survive conditions outside the host. In Vibrio cholerae serotype O1 (strain ATCC 39315 / El Tor Inaba N16961), this protein is Co-chaperone protein DjlA.